A 331-amino-acid chain; its full sequence is NADH-quinone oxidoreductase subunit H (331 aa).

Helical transmembrane passes span 13–33 (FLISSATVIFLVLNIAAVLTL), 80–100 (WVFLAAPIAMFLPAAAVWLVI), 113–133 (IGLVYFFAITSIGALGVIMAG), 159–179 (LILSLLGVAMLTGSLSMVDIV), 183–203 (AGGFWNWIIWPQLPMFLAFFV), 249–269 (VMSAVASTLFLGGWQPPLPFL), 273–293 (VFNWLWLGIKTTLLIFVFQWI), and 311–331 (KILVPVTILWLFVTAGAMLVI).

Belongs to the complex I subunit 1 family. NDH-1 is composed of 14 different subunits. Subunits NuoA, H, J, K, L, M, N constitute the membrane sector of the complex.

The protein localises to the cell membrane. The catalysed reaction is a quinone + NADH + 5 H(+)(in) = a quinol + NAD(+) + 4 H(+)(out). Functionally, NDH-1 shuttles electrons from NADH, via FMN and iron-sulfur (Fe-S) centers, to quinones in the respiratory chain. The immediate electron acceptor for the enzyme in this species is believed to be ubiquinone. Couples the redox reaction to proton translocation (for every two electrons transferred, four hydrogen ions are translocated across the cytoplasmic membrane), and thus conserves the redox energy in a proton gradient. This subunit may bind ubiquinone. The sequence is that of NADH-quinone oxidoreductase subunit H from Rubrobacter xylanophilus (strain DSM 9941 / JCM 11954 / NBRC 16129 / PRD-1).